Consider the following 243-residue polypeptide: Peptidase E (243 aa).

Catalysis depends on charge relay system residues serine 118, aspartate 133, and histidine 155.

Belongs to the peptidase S51 family.

Its subcellular location is the cytoplasm. It carries out the reaction Dipeptidase E catalyzes the hydrolysis of dipeptides Asp-|-Xaa. It does not act on peptides with N-terminal Glu, Asn or Gln, nor does it cleave isoaspartyl peptides.. In terms of biological role, hydrolyzes dipeptides containing N-terminal aspartate residues. May play a role in allowing the cell to use peptide aspartate to spare carbon otherwise required for the synthesis of the aspartate family of amino acids. In Streptomyces coelicolor (strain ATCC BAA-471 / A3(2) / M145), this protein is Peptidase E.